A 155-amino-acid chain; its full sequence is RNA pyrophosphohydrolase (155 aa).

Positions 5–147 constitute a Nudix hydrolase domain; that stretch reads KYRPNVAAII…KRQVYRQVIA (143 aa). The Nudix box signature appears at 42–63; that stretch reads GGIDEGETPLEALHRELLEEIG.

Belongs to the Nudix hydrolase family. RppH subfamily. It depends on a divalent metal cation as a cofactor.

Functionally, accelerates the degradation of transcripts by removing pyrophosphate from the 5'-end of triphosphorylated RNA, leading to a more labile monophosphorylated state that can stimulate subsequent ribonuclease cleavage. The polypeptide is RNA pyrophosphohydrolase (Helicobacter pylori (strain HPAG1)).